The primary structure comprises 116 residues: Ig heavy chain V region 1B43 (116 aa).

A signal peptide spans 1-18; the sequence is MRVLILLCLFTAFPGILS. The interval 19–48 is framework-1; sequence DVQLQESGPDLVKPSQSLSLTCTVTGYSIT. Cys40 and Cys114 are oxidised to a cystine. The tract at residues 49-53 is complementarity-determining-1; that stretch reads SGYSW. The interval 54-67 is framework-2; that stretch reads HWIRQFPGNKLEWM. The segment at 68–84 is complementarity-determining-2; that stretch reads GYIHYSGNTSYNPSLKS. The segment at 85-116 is framework-3; it reads RISITRDTSKNQFFLQLNSVTTEDTATYYCAR.

The chain is Ig heavy chain V region 1B43 from Mus musculus (Mouse).